Reading from the N-terminus, the 895-residue chain is Putative endoplasmic reticulum metallopeptidase 1-A (895 aa).

The tract at residues 1–30 (MLRRRGGPNELRDELNNSKNQPEDDQRTKR) is disordered. At 1 to 34 (MLRRRGGPNELRDELNNSKNQPEDDQRTKRGRES) the chain is on the cytoplasmic side. Positions 10-30 (ELRDELNNSKNQPEDDQRTKR) are enriched in basic and acidic residues. The helical transmembrane segment at 35–55 (IGFRHWIYFVLTVAIVYAGVV) threads the bilayer. The Lumenal segment spans residues 56–383 (ALHRKMPAVR…VVGLFTVYYS (328 aa)). Positions 174 and 186 each coordinate Zn(2+). Catalysis depends on Glu220, which acts as the Proton acceptor. Residues Glu221, Glu247, and His323 each coordinate Zn(2+). A helical membrane pass occupies residues 384–404 (VNVGKLLNYIACFATYFLVVL). The Cytoplasmic segment spans residues 405 to 423 (RIRNRLYSVGDLAIAFKHH). The helical transmembrane segment at 424–444 (VVAFLAMVITMLLIIAFVVQM) threads the bilayer. Topologically, residues 445-452 (DLVMCWYK) are lumenal. Residues 453 to 473 (MPEIVGALYVLPMLIAGAIVH) form a helical membrane-spanning segment. Residues 474–492 (SHYADNNRIRNVEMVQYDT) are Cytoplasmic-facing. A helical membrane pass occupies residues 493-513 (ILLSFASILFLMTFYNLSSAF). The Lumenal portion of the chain corresponds to 514–517 (YVLN). The helical transmembrane segment at 518 to 538 (NLILPVFKDIIIWALGLFGVI) threads the bilayer. The Cytoplasmic portion of the chain corresponds to 539-544 (RRVTPR). The helical transmembrane segment at 545–565 (VLFFTQLFCFLPTFVFAAYAI) threads the bilayer. Residues 566-586 (SQCVDFFVPVMGRLGNAINPE) lie on the Lumenal side of the membrane. Residues 587–607 (FIMGPLGLVIASGFILFVNNL) form a helical membrane-spanning segment. The Cytoplasmic segment spans residues 608-613 (FYISRR). A helical membrane pass occupies residues 614-634 (MNYIIRLLFAIFALFILVLIT). The Lumenal portion of the chain corresponds to 635–895 (TKVGNPYEYS…GRSEIVVKIF (261 aa)). N-linked (GlcNAc...) asparagine glycosylation is found at Asn659, Asn702, and Asn758.

This sequence belongs to the peptidase M28 family. Requires Zn(2+) as cofactor.

It localises to the endoplasmic reticulum membrane. The polypeptide is Putative endoplasmic reticulum metallopeptidase 1-A (Caenorhabditis elegans).